The chain runs to 316 residues: uncharacterized protein (316 aa).

BNR repeat units follow at residues 62–73 (FISDSQGLKFSP), 124–135 (KISVDNGLTWSN), 196–207 (FISRDGGLTWRV), and 242–253 (YFSLDQGRTWNQ).

This is an uncharacterized protein from Saccharomyces cerevisiae (strain ATCC 204508 / S288c) (Baker's yeast).